The following is a 414-amino-acid chain: Procollagen C-endopeptidase enhancer 2 (414 aa).

An N-terminal signal peptide occupies residues 1 to 22 (MGGASACIPLCLLLATARMARP). 7 disulfides stabilise this stretch: C32–C58, C85–C106, C153–C180, C207–C230, C296–C363, C300–C366, and C311–C414. CUB domains lie at 32-143 (CGGI…YSAA) and 153-267 (CGGR…YKFR). Residues 296 to 414 (CQQKCRRMGT…PMNALKNKQC (119 aa)) enclose the NTR domain. N-linked (GlcNAc...) asparagine glycosylation is present at N354.

In terms of assembly, interacts with heparin with high affinity, and type I or II collagen. Post-translationally, O-glycosylated; contains sialic acid.

The protein localises to the secreted. Binds to the C-terminal propeptide of types I and II procollagens and may enhance the cleavage of that propeptide by BMP1. The protein is Procollagen C-endopeptidase enhancer 2 (Pcolce2) of Mus musculus (Mouse).